Here is a 401-residue protein sequence, read N- to C-terminus: Bifunctional enzyme IspD/IspF (401 aa).

The 2-C-methyl-D-erythritol 4-phosphate cytidylyltransferase stretch occupies residues 1-234 (MQKPPRTAAI…SRLTAALGDI (234 aa)). The tract at residues 235–401 (RTGTGYDVHA…SPWGAEGQAS (167 aa)) is 2-C-methyl-D-erythritol 2,4-cyclodiphosphate synthase. A divalent metal cation is bound by residues aspartate 241 and histidine 243. 4-CDP-2-C-methyl-D-erythritol 2-phosphate-binding positions include 241–243 (DVH) and 267–268 (HS). Histidine 275 is an a divalent metal cation binding site. 4-CDP-2-C-methyl-D-erythritol 2-phosphate-binding positions include 289–291 (DIG), 365–368 (TTSE), phenylalanine 372, and arginine 375.

It in the N-terminal section; belongs to the IspD/TarI cytidylyltransferase family. IspD subfamily. The protein in the C-terminal section; belongs to the IspF family. The cofactor is a divalent metal cation.

It catalyses the reaction 2-C-methyl-D-erythritol 4-phosphate + CTP + H(+) = 4-CDP-2-C-methyl-D-erythritol + diphosphate. The enzyme catalyses 4-CDP-2-C-methyl-D-erythritol 2-phosphate = 2-C-methyl-D-erythritol 2,4-cyclic diphosphate + CMP. It participates in isoprenoid biosynthesis; isopentenyl diphosphate biosynthesis via DXP pathway; isopentenyl diphosphate from 1-deoxy-D-xylulose 5-phosphate: step 2/6. It functions in the pathway isoprenoid biosynthesis; isopentenyl diphosphate biosynthesis via DXP pathway; isopentenyl diphosphate from 1-deoxy-D-xylulose 5-phosphate: step 4/6. Its function is as follows. Bifunctional enzyme that catalyzes the formation of 4-diphosphocytidyl-2-C-methyl-D-erythritol from CTP and 2-C-methyl-D-erythritol 4-phosphate (MEP) (IspD), and catalyzes the conversion of 4-diphosphocytidyl-2-C-methyl-D-erythritol 2-phosphate (CDP-ME2P) to 2-C-methyl-D-erythritol 2,4-cyclodiphosphate (ME-CPP) with a corresponding release of cytidine 5-monophosphate (CMP) (IspF). The chain is Bifunctional enzyme IspD/IspF from Rhodopseudomonas palustris (strain HaA2).